A 94-amino-acid polypeptide reads, in one-letter code: CRISPR-associated endoribonuclease Cas2 (94 aa).

A Mg(2+)-binding site is contributed by Asp-11.

This sequence belongs to the CRISPR-associated endoribonuclease Cas2 protein family. As to quaternary structure, homodimer, forms a heterotetramer with a Cas1 homodimer. Mg(2+) serves as cofactor.

Its function is as follows. CRISPR (clustered regularly interspaced short palindromic repeat), is an adaptive immune system that provides protection against mobile genetic elements (viruses, transposable elements and conjugative plasmids). CRISPR clusters contain sequences complementary to antecedent mobile elements and target invading nucleic acids. CRISPR clusters are transcribed and processed into CRISPR RNA (crRNA). Functions as a ssRNA-specific endoribonuclease. Involved in the integration of spacer DNA into the CRISPR cassette. This Allochromatium vinosum (strain ATCC 17899 / DSM 180 / NBRC 103801 / NCIMB 10441 / D) (Chromatium vinosum) protein is CRISPR-associated endoribonuclease Cas2.